Consider the following 118-residue polypeptide: Beta-defensin 126 (118 aa).

Positions 1-20 are cleaved as a signal peptide; the sequence is MKSLLFTLAVFMLLAQLVSG. Residues 21–63 are in vitro binds to LPS, mediates antimicrobial activity and inhibits LPS-mediated inflammation; the sequence is SWYVKKCLNDVGICKKKCKPEELHVKNGWAMCGKQRDCCVPAD. Disulfide bonds link cysteine 27-cysteine 58, cysteine 34-cysteine 52, and cysteine 38-cysteine 59.

The protein belongs to the beta-defensin family. In terms of assembly, homodimer or homooligomer; disulfide-linked. Post-translationally, O-glycosylated; glycans contain alpha(2,3)-linked sialic acids.

It localises to the secreted. Its function is as follows. Highly glycosylated atypical beta-defensin involved in several aspects of sperm function. Facilitates sperm transport in the female reproductive tract and contributes to sperm protection against immunodetection; both functions are probably implicating the negative surface charge provided by its O-linked oligosaccharides in the sperm glycocalyx. Involved in binding of sperm to oviductal epithelial cells to form a sperm reservoir until ovulation. Release from the sperm surface during capacitation and ovaluation by an elevation of oviductal fluid pH is unmasking other surface components and allows sperm to penetrate the cumulus matrix and bind to the zona pellucida of the oocyte. In vitro has antimicrobial activity and may inhibit LPS-mediated inflammation. The protein is Beta-defensin 126 (DEFB126) of Pongo pygmaeus (Bornean orangutan).